Consider the following 65-residue polypeptide: Putative antitoxin VapB7 (65 aa).

It belongs to the UPF0165 family.

In terms of biological role, possibly the antitoxin component of a type II toxin-antitoxin (TA) system. Its cognate toxin is VapC7 (Potential). The protein is Putative antitoxin VapB7 (vapB7) of Archaeoglobus fulgidus (strain ATCC 49558 / DSM 4304 / JCM 9628 / NBRC 100126 / VC-16).